Here is a 334-residue protein sequence, read N- to C-terminus: Phosphate acyltransferase (334 aa).

Belongs to the PlsX family. In terms of assembly, homodimer. Probably interacts with PlsY.

The protein localises to the cytoplasm. It carries out the reaction a fatty acyl-[ACP] + phosphate = an acyl phosphate + holo-[ACP]. It functions in the pathway lipid metabolism; phospholipid metabolism. Functionally, catalyzes the reversible formation of acyl-phosphate (acyl-PO(4)) from acyl-[acyl-carrier-protein] (acyl-ACP). This enzyme utilizes acyl-ACP as fatty acyl donor, but not acyl-CoA. The sequence is that of Phosphate acyltransferase from Halothermothrix orenii (strain H 168 / OCM 544 / DSM 9562).